Consider the following 192-residue polypeptide: UPF0312 protein YE1254 (192 aa).

The first 23 residues, 1–23, serve as a signal peptide directing secretion; it reads MFNKTLLGLTVGALMFTAGSAVA.

Belongs to the UPF0312 family. Type 1 subfamily.

Its subcellular location is the periplasm. In Yersinia enterocolitica serotype O:8 / biotype 1B (strain NCTC 13174 / 8081), this protein is UPF0312 protein YE1254.